Consider the following 656-residue polypeptide: Probable Xaa-Pro aminopeptidase P (656 aa).

The Mn(2+) site is built by aspartate 453, aspartate 464, glutamate 562, and glutamate 576.

It belongs to the peptidase M24B family. Mn(2+) serves as cofactor.

The catalysed reaction is Release of any N-terminal amino acid, including proline, that is linked to proline, even from a dipeptide or tripeptide.. In terms of biological role, catalyzes the removal of a penultimate prolyl residue from the N-termini of peptides. This chain is Probable Xaa-Pro aminopeptidase P (ampp), found in Pyrenophora teres f. teres (strain 0-1) (Barley net blotch fungus).